The primary structure comprises 182 residues: Ferredoxin-thioredoxin reductase subunit A1, chloroplastic (182 aa).

Residues 1–81 constitute a chloroplast transit peptide; it reads MSSQIALSPA…VAIKSADSIN (81 aa).

This sequence belongs to the ferredoxin thioredoxin reductase alpha subunit family. In terms of assembly, heterodimer of subunit A (variable subunit) and subunit B (catalytic subunit). Heterodimeric FTR forms a complex with ferredoxin and thioredoxin.

The protein resides in the plastid. It localises to the chloroplast. Its function is as follows. Variable subunit of the ferredoxin-thioredoxin reductase (FTR), which catalyzes the two-electron reduction of thioredoxins by the electrons provided by reduced ferredoxin. This is Ferredoxin-thioredoxin reductase subunit A1, chloroplastic from Arabidopsis thaliana (Mouse-ear cress).